A 99-amino-acid chain; its full sequence is Plastocyanin (99 aa).

The Plastocyanin-like domain occupies 1-99 (IEVLLGSDDG…AGMVGKVTVN (99 aa)). Cu cation is bound by residues His37, Cys84, His87, and Met92.

Belongs to the plastocyanin family. Cu(2+) serves as cofactor.

The protein localises to the plastid. It localises to the chloroplast thylakoid membrane. Participates in electron transfer between P700 and the cytochrome b6-f complex in photosystem I. The sequence is that of Plastocyanin (PETE) from Solanum crispum (Chilean potato-tree).